Consider the following 826-residue polypeptide: Lysine-specific histone demethylase 1B (826 aa).

Positions M1 to R11 are enriched in basic residues. The disordered stretch occupies residues M1–S46. Phosphoserine is present on residues S17 and S26. Zn(2+) contacts are provided by C53, C58, C65, C73, H84, H90, C92, C95, C142, C147, C169, and C185. A CW-type zinc finger spans residues D133–V193. S253 carries the phosphoserine modification. The segment at Y279–D298 is GLYR1-binding. The region spanning P281 to Q379 is the SWIRM domain. K389–V445 serves as a coordination point for FAD. Histone H3-binding stretches follow at residues I444–L473, F493–R504, and F544–H578. Positions F570–A572 are GLYR1-binding. Residues V604, E799, and Q807–V809 each bind FAD. The segment at N802–R818 is GLYR1-binding.

Belongs to the flavin monoamine oxidase family. Interacts with its cofactor GLYR1 at nucleosomes; this interaction stimulates H3K4me1 and H3K4me2 demethylation. In contrast to KDM1A, does not form a complex with RCOR1/CoREST. Possible accessory component of the polycomb repressive deubiquitinase (PR-DUB) complex, at least composed of BAP1, one of ASXL1, ASXL2 or (probably) ASXL3 and one of MBD5 or MBD6. The PR-DUB core associates with a number of accessory proteins, including FOXK1, FOXK2, KDM1B, HCFC1 and OGT; KDM1B specifically associates with ASXL2 PR-DUB complexes. The cofactor is FAD. Zn(2+) serves as cofactor. Expressed in growing oocytes and in intestinal gland.

Its subcellular location is the nucleus. It localises to the chromosome. The catalysed reaction is N(6),N(6)-dimethyl-L-lysyl(4)-[histone H3] + 2 A + 2 H2O = L-lysyl(4)-[histone H3] + 2 formaldehyde + 2 AH2. It catalyses the reaction N(6)-methyl-L-lysyl(4)-[histone H3] + A + H2O = L-lysyl(4)-[histone H3] + formaldehyde + AH2. Inhibited by tranylcypromine, but not by pargyline, deprenyl or rasagiline. Histone H3K4me1 and H3K4me2 demethylase activity is inhibited by DNA, this inhibition is released in complex with GLYR1. Its function is as follows. Histone demethylase that demethylates 'Lys-4' of histone H3, a specific tag for epigenetic transcriptional activation, thereby acting as a corepressor. Required for de novo DNA methylation of a subset of imprinted genes during oogenesis. Acts by oxidizing the substrate by FAD to generate the corresponding imine that is subsequently hydrolyzed. Demethylates both mono- and di-methylated 'Lys-4' of histone H3. Has no effect on tri-methylated 'Lys-4', mono-, di- or tri-methylated 'Lys-9', mono-, di- or tri-methylated 'Lys-27', mono-, di- or tri-methylated 'Lys-36' of histone H3, or on mono-, di- or tri-methylated 'Lys-20' of histone H4. Functionally, histone demethylase that demethylates 'Lys-4' of histone H3, a specific tag for epigenetic transcriptional activation, thereby acting as a corepressor. Required for de novo DNA methylation of a subset of imprinted genes during oogenesis. Acts by oxidizing the substrate by FAD to generate the corresponding imine that is subsequently hydrolyzed. Demethylates both mono- and di-methylated 'Lys-4' of histone H3. Has no effect on tri-methylated 'Lys-4', mono-, di- or tri-methylated 'Lys-9', mono-, di- or tri-methylated 'Lys-27', mono-, di- or tri-methylated 'Lys-36' of histone H3, or on mono-, di- or tri-methylated 'Lys-20' of histone H4. Alone, it is unable to demethylate H3K4me on nucleosomes and requires the presence of GLYR1 to achieve such activity, they form a multifunctional enzyme complex that modifies transcribed chromatin and facilitates Pol II transcription through nucleosomes. This Mus musculus (Mouse) protein is Lysine-specific histone demethylase 1B.